A 621-amino-acid chain; its full sequence is 1-deoxy-D-xylulose-5-phosphate synthase (621 aa).

Thiamine diphosphate contacts are provided by residues His-80 and 121–123; that span reads GHS. Asp-152 lines the Mg(2+) pocket. Thiamine diphosphate contacts are provided by residues 153–154, Asn-181, Tyr-288, and Glu-370; that span reads GA. Asn-181 is a Mg(2+) binding site.

Belongs to the transketolase family. DXPS subfamily. In terms of assembly, homodimer. It depends on Mg(2+) as a cofactor. Thiamine diphosphate is required as a cofactor.

The catalysed reaction is D-glyceraldehyde 3-phosphate + pyruvate + H(+) = 1-deoxy-D-xylulose 5-phosphate + CO2. The protein operates within metabolic intermediate biosynthesis; 1-deoxy-D-xylulose 5-phosphate biosynthesis; 1-deoxy-D-xylulose 5-phosphate from D-glyceraldehyde 3-phosphate and pyruvate: step 1/1. Catalyzes the acyloin condensation reaction between C atoms 2 and 3 of pyruvate and glyceraldehyde 3-phosphate to yield 1-deoxy-D-xylulose-5-phosphate (DXP). In Vibrio parahaemolyticus serotype O3:K6 (strain RIMD 2210633), this protein is 1-deoxy-D-xylulose-5-phosphate synthase.